The following is a 122-amino-acid chain: Large ribosomal subunit protein uL14 (122 aa).

The protein belongs to the universal ribosomal protein uL14 family. As to quaternary structure, part of the 50S ribosomal subunit. Forms a cluster with proteins L3 and L19. In the 70S ribosome, L14 and L19 interact and together make contacts with the 16S rRNA in bridges B5 and B8.

Binds to 23S rRNA. Forms part of two intersubunit bridges in the 70S ribosome. The protein is Large ribosomal subunit protein uL14 of Synechococcus sp. (strain JA-3-3Ab) (Cyanobacteria bacterium Yellowstone A-Prime).